Here is a 122-residue protein sequence, read N- to C-terminus: Small ribosomal subunit protein uS13 (122 aa).

Residues Arg-99–Lys-122 form a disordered region.

The protein belongs to the universal ribosomal protein uS13 family. As to quaternary structure, part of the 30S ribosomal subunit. Forms a loose heterodimer with protein S19. Forms two bridges to the 50S subunit in the 70S ribosome.

In terms of biological role, located at the top of the head of the 30S subunit, it contacts several helices of the 16S rRNA. In the 70S ribosome it contacts the 23S rRNA (bridge B1a) and protein L5 of the 50S subunit (bridge B1b), connecting the 2 subunits; these bridges are implicated in subunit movement. Contacts the tRNAs in the A and P-sites. The chain is Small ribosomal subunit protein uS13 from Bradyrhizobium sp. (strain ORS 278).